A 135-amino-acid polypeptide reads, in one-letter code: uncharacterized protein (135 aa).

Residues Val56–Val135 form a disordered region. A compositionally biased stretch (basic residues) spans Asn64–Gln74. Polar residues predominate over residues Ser77–Glu89. A compositionally biased stretch (basic and acidic residues) spans Tyr108 to Val135.

This is an uncharacterized protein from Schizosaccharomyces pombe (strain 972 / ATCC 24843) (Fission yeast).